Here is a 502-residue protein sequence, read N- to C-terminus: Protein O-glucosyltransferase 2 (502 aa).

The N-terminal stretch at 1-19 is a signal peptide; it reads MFGTLLLYCFFLATVPALA. The stretch at 24 to 130 is one Filamin repeat; the sequence is ERQLSPEKSE…VAKSPYILKG (107 aa). N-linked (GlcNAc...) asparagine glycans are attached at residues N302 and N414. A Prevents secretion from ER motif is present at residues 499 to 502; that stretch reads KDEL.

The protein belongs to the KDELC family. Post-translationally, N-glycosylated.

The protein resides in the endoplasmic reticulum lumen. The enzyme catalyses L-seryl-[EGF-like domain protein] + UDP-alpha-D-glucose = 3-O-(beta-D-glucosyl)-L-seryl-[EGF-like domain protein] + UDP + H(+). It carries out the reaction L-seryl-[EGF-like domain protein] + UDP-alpha-D-xylose = 3-O-(beta-D-xylosyl)-L-seryl-[EGF-like domain protein] + UDP + H(+). It functions in the pathway protein modification; protein glycosylation. In terms of biological role, protein glucosyltransferase that catalyzes the transfer of glucose from UDP-glucose to a serine residue within the consensus sequence peptide C-X-N-T-X-G-S-F-X-C. Can also catalyze the transfer of xylose from UDP-xylose but less efficiently. Specifically targets extracellular EGF repeats of proteins such as NOTCH1, NOTCH3, FBN1, FBN2 and LTBP1. May regulate the transport of NOTCH1 and NOTCH3 to the plasma membrane and thereby the Notch signaling pathway. This is Protein O-glucosyltransferase 2 from Homo sapiens (Human).